We begin with the raw amino-acid sequence, 156 residues long: ATP synthase subunit b (156 aa).

The helical transmembrane segment at 11-31 (LIAFVVFVIFCMKYVWPPIIG) threads the bilayer.

Belongs to the ATPase B chain family. In terms of assembly, F-type ATPases have 2 components, F(1) - the catalytic core - and F(0) - the membrane proton channel. F(1) has five subunits: alpha(3), beta(3), gamma(1), delta(1), epsilon(1). F(0) has three main subunits: a(1), b(2) and c(10-14). The alpha and beta chains form an alternating ring which encloses part of the gamma chain. F(1) is attached to F(0) by a central stalk formed by the gamma and epsilon chains, while a peripheral stalk is formed by the delta and b chains.

Its subcellular location is the cell inner membrane. F(1)F(0) ATP synthase produces ATP from ADP in the presence of a proton or sodium gradient. F-type ATPases consist of two structural domains, F(1) containing the extramembraneous catalytic core and F(0) containing the membrane proton channel, linked together by a central stalk and a peripheral stalk. During catalysis, ATP synthesis in the catalytic domain of F(1) is coupled via a rotary mechanism of the central stalk subunits to proton translocation. Functionally, component of the F(0) channel, it forms part of the peripheral stalk, linking F(1) to F(0). The sequence is that of ATP synthase subunit b from Colwellia psychrerythraea (strain 34H / ATCC BAA-681) (Vibrio psychroerythus).